Consider the following 152-residue polypeptide: Small ribosomal subunit protein uS15 (152 aa).

It belongs to the universal ribosomal protein uS15 family. As to quaternary structure, part of the 30S ribosomal subunit.

The protein is Small ribosomal subunit protein uS15 of Methanospirillum hungatei JF-1 (strain ATCC 27890 / DSM 864 / NBRC 100397 / JF-1).